Here is a 422-residue protein sequence, read N- to C-terminus: GTPase Obg (422 aa).

Residues 1–158 (MFYDRARIFV…RWLDLELKLL (158 aa)) enclose the Obg domain. One can recognise an OBG-type G domain in the interval 159–329 (ADVGLVGFPN…LVYRVSALLE (171 aa)). Residues 165 to 172 (GFPNAGKS), 190 to 194 (FTTIT), 212 to 215 (DIPG), 282 to 285 (NKMD), and 310 to 312 (SAV) each bind GTP. Residues S172 and T192 each coordinate Mg(2+). The region spanning 337–422 (VPEALERPVI…IGDYEFEYVE (86 aa)) is the OCT domain.

The protein belongs to the TRAFAC class OBG-HflX-like GTPase superfamily. OBG GTPase family. In terms of assembly, monomer. Requires Mg(2+) as cofactor.

Its subcellular location is the cytoplasm. An essential GTPase which binds GTP, GDP and possibly (p)ppGpp with moderate affinity, with high nucleotide exchange rates and a fairly low GTP hydrolysis rate. Plays a role in control of the cell cycle, stress response, ribosome biogenesis and in those bacteria that undergo differentiation, in morphogenesis control. This Pelotomaculum thermopropionicum (strain DSM 13744 / JCM 10971 / SI) protein is GTPase Obg.